The following is a 731-amino-acid chain: Probable G-protein coupled receptor 149 (731 aa).

At M1–Y35 the chain is on the extracellular side. N-linked (GlcNAc...) asparagine glycans are attached at residues N7, N11, and N21. Residues L36 to I56 form a helical membrane-spanning segment. The Cytoplasmic portion of the chain corresponds to S57–M69. A helical transmembrane segment spans residues L70–F90. Residues L91–A109 lie on the Extracellular side of the membrane. C105 and C182 are joined by a disulfide. The helical transmembrane segment at L110–Y132 threads the bilayer. The Cytoplasmic portion of the chain corresponds to T133–L155. Residues T156–V176 traverse the membrane as a helical segment. The Extracellular portion of the chain corresponds to R177 to S189. A helical transmembrane segment spans residues Y190–V210. Residues P211–R310 lie on the Cytoplasmic side of the membrane. The disordered stretch occupies residues R234–S271. Residues F311–V331 form a helical membrane-spanning segment. The Extracellular portion of the chain corresponds to V332 to P342. The chain crosses the membrane as a helical span at residues L343–L363. Topologically, residues S364–S731 are cytoplasmic. A disordered region spans residues N475–S526. 2 stretches are compositionally biased toward basic and acidic residues: residues T479–G497 and G510–S526.

This sequence belongs to the G-protein coupled receptor 1 family.

The protein resides in the cell membrane. In terms of biological role, orphan receptor. In Homo sapiens (Human), this protein is Probable G-protein coupled receptor 149 (GPR149).